Here is a 507-residue protein sequence, read N- to C-terminus: Capsid vertex component 1 (507 aa).

Positions 219 to 257 (AAAETSVSKHHPALENPSNIRGSAGGEGGGGRAGTGGTV) are disordered. Gly residues predominate over residues 241-257 (SAGGEGGGGRAGTGGTV).

The protein belongs to the herpesviridae CVC1 protein family. Interacts (via C-terminus) with capsid vertex component 2/CVC2.

The protein resides in the virion. It localises to the host nucleus. Capsid vertex-specific component that plays a role during viral DNA encapsidation, assuring correct genome cleavage and presumably stabilizing capsids that contain full-length viral genomes. This Epstein-Barr virus (strain B95-8) (HHV-4) protein is Capsid vertex component 1.